The chain runs to 547 residues: Putative cysteine ligase BshC (547 aa).

Residues 462 to 484 are a coiled coil; the sequence is NLAEENLDRVIAQARFLRQKVEH.

It belongs to the BshC family.

In terms of biological role, involved in bacillithiol (BSH) biosynthesis. May catalyze the last step of the pathway, the addition of cysteine to glucosamine malate (GlcN-Mal) to generate BSH. The sequence is that of Putative cysteine ligase BshC from Heliobacterium modesticaldum (strain ATCC 51547 / Ice1).